Reading from the N-terminus, the 408-residue chain is Peptidase T (408 aa).

H78 is a binding site for Zn(2+). D80 is an active-site residue. D141 contacts Zn(2+). E175 serves as the catalytic Proton acceptor. The Zn(2+) site is built by E176, D198, and H380.

The protein belongs to the peptidase M20B family. It depends on Zn(2+) as a cofactor.

Its subcellular location is the cytoplasm. It catalyses the reaction Release of the N-terminal residue from a tripeptide.. Functionally, cleaves the N-terminal amino acid of tripeptides. This chain is Peptidase T, found in Clostridium botulinum (strain ATCC 19397 / Type A).